Reading from the N-terminus, the 60-residue chain is Cecropin-B type 1 (60 aa).

The signal sequence occupies residues 1–24; the sequence is MNFNKLFALVLLIGLVLLTGQTEA. The residue at position 58 (I58) is an Isoleucine amide.

Belongs to the cecropin family.

The protein resides in the secreted. Functionally, cecropins have lytic and antibacterial activity against several Gram-positive and Gram-negative bacteria. This chain is Cecropin-B type 1 (CECB1), found in Aedes albopictus (Asian tiger mosquito).